Reading from the N-terminus, the 146-residue chain is MARMHTRKRGRSGSKRIEVRERPSWIQYSDDEIKEMIVKMRKQGMTKSMIGIRLRDQYAIPGTRPVLHMKLGQVLKENNLESDVPEDLQALIERYKRAMKHLSLNKHDMNNKRKAQLIMSKMLRLIRYYKRTSRLPQDWSLERVLQ.

This sequence belongs to the universal ribosomal protein uS15 family. Part of the 30S ribosomal subunit.

This is Small ribosomal subunit protein uS15 from Picrophilus torridus (strain ATCC 700027 / DSM 9790 / JCM 10055 / NBRC 100828 / KAW 2/3).